The chain runs to 130 residues: Small ribosomal subunit protein uS11 (130 aa).

This sequence belongs to the universal ribosomal protein uS11 family. Part of the 30S ribosomal subunit. Interacts with proteins S7 and S18. Binds to IF-3.

In terms of biological role, located on the platform of the 30S subunit, it bridges several disparate RNA helices of the 16S rRNA. Forms part of the Shine-Dalgarno cleft in the 70S ribosome. This Sulfurimonas denitrificans (strain ATCC 33889 / DSM 1251) (Thiomicrospira denitrificans (strain ATCC 33889 / DSM 1251)) protein is Small ribosomal subunit protein uS11.